Reading from the N-terminus, the 508-residue chain is MGLPWYRVHTVVLNDPGRLIAVHLMHTALVSGWAGSMALYELAVFDPSDPVLDPMWRQGMFVIPFMTRIGITKSWGGWSITGDTVSDAGIWSFEGVAAAHITLSGLLFLSAIWHWVYWDLDLFRDERTGKPSLDLPKIFGIHLFLSGVLCFGFGAFHITGLFGPGIWISDPYGLTGKVQPVDPAWGAEGFDPFIPGGIASHHIAAGILGILAGLFHLSVRPPQRLYKALRMGNVETVLSSSIAAVFFAAFVVSGTMWYGSATTPIELFGPTRYQWDQGYFQQEIDRRIRASRAEGLSLSEAWSRIPEKLAFYDYIGNNPAKGGLFRAGAMDNGDGIAIGWLGHAAFKDKEGHELFVRRMPTFFETFPVVLVDEEGIVRADAPFRRAESKYSVEQVGVTVEFYGGELNGVGFNDPSTVKKYARRAQLGEIFEFDRATLKSDGVFRSSPRGWFTFGHATFALIFFFGHIWHGARTLFRDVFAGIDPDLDAQVEFGAFQKLGDPTTERQGI.

Helical transmembrane passes span 21–36 (AVHL…WAGS), 101–115 (ITLS…IWHW), 140–156 (GIHL…FGAF), 203–218 (IAAG…FHLS), 237–252 (VLSS…AFVV), and 457–472 (TFAL…HGAR).

The protein belongs to the PsbB/PsbC family. PsbB subfamily. In terms of assembly, PSII is composed of 1 copy each of membrane proteins PsbA, PsbB, PsbC, PsbD, PsbE, PsbF, PsbH, PsbI, PsbJ, PsbK, PsbL, PsbM, PsbT, PsbX, PsbY, PsbZ, Psb30/Ycf12, at least 3 peripheral proteins of the oxygen-evolving complex and a large number of cofactors. It forms dimeric complexes. Binds multiple chlorophylls. PSII binds additional chlorophylls, carotenoids and specific lipids. serves as cofactor.

The protein localises to the plastid. The protein resides in the chloroplast thylakoid membrane. In terms of biological role, one of the components of the core complex of photosystem II (PSII). It binds chlorophyll and helps catalyze the primary light-induced photochemical processes of PSII. PSII is a light-driven water:plastoquinone oxidoreductase, using light energy to abstract electrons from H(2)O, generating O(2) and a proton gradient subsequently used for ATP formation. The protein is Photosystem II CP47 reaction center protein of Psilotum nudum (Whisk fern).